The primary structure comprises 361 residues: D-alanine--D-alanine ligase (361 aa).

The region spanning 144 to 350 is the ATP-grasp domain; it reads KLCVSEAGIA…FPELCDRLLQ (207 aa). 177-232 provides a ligand contact to ATP; it reads PETLIYPVFVKPAHLGSSVGISKVSVQGELPEALAHACNLDTKVLIEQAMHGKEIE. Residues Asp-303, Glu-317, and Asn-319 each coordinate Mg(2+).

This sequence belongs to the D-alanine--D-alanine ligase family. The cofactor is Mg(2+). Requires Mn(2+) as cofactor.

The protein localises to the cytoplasm. It catalyses the reaction 2 D-alanine + ATP = D-alanyl-D-alanine + ADP + phosphate + H(+). It functions in the pathway cell wall biogenesis; peptidoglycan biosynthesis. In terms of biological role, cell wall formation. The chain is D-alanine--D-alanine ligase from Chlorobium phaeovibrioides (strain DSM 265 / 1930) (Prosthecochloris vibrioformis (strain DSM 265)).